We begin with the raw amino-acid sequence, 106 residues long: uncharacterized protein (106 aa).

The next 2 helical transmembrane spans lie at 17 to 37 and 55 to 75; these read AGLLMTISLAKSFSFAIAVLV and FSSSYVFLYFIVICRLRFMIF.

The protein localises to the membrane. This is an uncharacterized protein from Saccharomyces cerevisiae (strain ATCC 204508 / S288c) (Baker's yeast).